A 372-amino-acid chain; its full sequence is PqqA peptide cyclase (372 aa).

A Radical SAM core domain is found at 4–220 (APPPLSVLLE…ETARRQLGDR (217 aa)). Residues Cys18, Cys22, and Cys25 each coordinate [4Fe-4S] cluster.

It belongs to the radical SAM superfamily. PqqE family. As to quaternary structure, interacts with PqqD. The interaction is necessary for activity of PqqE. It depends on [4Fe-4S] cluster as a cofactor.

It catalyses the reaction [PQQ precursor protein] + S-adenosyl-L-methionine = E-Y cross-linked-[PQQ precursor protein] + 5'-deoxyadenosine + L-methionine + H(+). It functions in the pathway cofactor biosynthesis; pyrroloquinoline quinone biosynthesis. Functionally, catalyzes the cross-linking of a glutamate residue and a tyrosine residue in the PqqA protein as part of the biosynthesis of pyrroloquinoline quinone (PQQ). The sequence is that of PqqA peptide cyclase from Xanthomonas axonopodis pv. citri (strain 306).